The chain runs to 144 residues: Protein cornichon (144 aa).

At 1–10 (MAFNFTAFTY) the chain is on the lumenal side. Residues 1-57 (MAFNFTAFTYIVALIGDAFLIFFAIFHVIAFDELKTDYKNPIDQCNSLNPLVLPEYL) form an interaction with grk region. Residues 11–31 (IVALIGDAFLIFFAIFHVIAF) traverse the membrane as a helical segment. Topologically, residues 32–56 (DELKTDYKNPIDQCNSLNPLVLPEY) are cytoplasmic. The helical transmembrane segment at 57–77 (LLHIFLNLLFLFCGEWFSLCI) threads the bilayer. Residues 78-122 (NIPLIAYHIWRYKNRPVMSGPGLYDPTTVLKTDTLYRNMREGWIK) lie on the Lumenal side of the membrane. A helical membrane pass occupies residues 123–143 (LAVYLISFFYYIYGMVYSLIS). Position 144 (Thr144) is a topological domain, cytoplasmic.

This sequence belongs to the cornichon family. Interacts with grk. In terms of tissue distribution, expressed in male and female somatic tissues.

It is found in the endoplasmic reticulum membrane. Its function is as follows. Acts as a cargo receptor necessary for the transportation of gurken (grk) to a transitional endoplasmic reticulum (tER) site and promotes its incorporation into coat protein complex II (COPII) vesicles. Associated with gurken, produces a signal received by torpedo resulting in a signaling pathway that first establishes posterior follicle cell fates and normal localization of the anterior and posterior determinants, later they act in a signaling event inducing dorsal follicle cell fates and regulating the dorsal-ventral pattern of egg and embryo. In Drosophila melanogaster (Fruit fly), this protein is Protein cornichon (cni).